The chain runs to 62 residues: Large ribosomal subunit protein uL29 (62 aa).

It belongs to the universal ribosomal protein uL29 family.

This Amoebophilus asiaticus (strain 5a2) protein is Large ribosomal subunit protein uL29.